A 510-amino-acid polypeptide reads, in one-letter code: MGLISGILFGIIFGVALMAGWSRMMTHRSSKRVAKAVDMKLLGSLSRDDLKKICGDNFPQWISFPAFEQVKWLNKLLSKMWPYIAEAATMVIRDSVEPLLEDYRPPGITSLKFSKLTLGNVAPKIEGIRVQSFKEGQVTMDVDLRWGGDPNIVLGVTALVASIPIQLKDLQVFTVARVIFQLADEIPCISAVVVALLAEPKPRIDYTLKAVGGSLTAIPGLSDMIDDTVDTIVKDMLQWPHRIVVPIGGIPVDLSDLELKPQGKLIVTVVKATNLKNKELIGKSDPYATIYIRPVFKYKTKAIENNLNPVWDQTFELIAEDKETQSLTVEVFDKDVGQDERLGLVKLPLSSLEAGVTKELELNLLSSLDTLKVKDKKDRGSITLKVHYHEFNKEEQMAALEDEKKIMEERKRLKEAGVIGSTMDAVGMVGSGLGAGVGMVGTGIGTGVGLVGSGVSSGVGMVGSGFGAVGSGLSKAGRFMGRTITGQSSKRSGSSTPVNTVPENDGAKQQ.

A helical transmembrane segment spans residues 1–21; the sequence is MGLISGILFGIIFGVALMAGW. SMP-LTD domains lie at 66 to 248 and 66 to 250; these read AFEQ…VPIG and AFEQ…IGGI. Positions 226–488 are phospholipid binding; the sequence is DDTVDTIVKD…FMGRTITGQS (263 aa). C2 domains are found at residues 242-362 and 246-364; these read RIVV…ELEL and PIGG…ELNL. Ca(2+) contacts are provided by Lys-278, Glu-279, Asp-285, Asp-333, Lys-334, Asp-335, Asp-339, and Glu-340. A coiled-coil region spans residues 390-417; that stretch reads EFNKEEQMAALEDEKKIMEERKRLKEAG. Positions 461-500 constitute a C2 3 domain; that stretch reads MVGSGFGAVGSGLSKAGRFMGRTITGQSSKRSGSSTPVNT. The interval 484–510 is disordered; it reads ITGQSSKRSGSSTPVNTVPENDGAKQQ.

It belongs to the synaptotagmin family. As to quaternary structure, interacts with the biotrophic pathogenic fungi Microbotryum violaceum effector MVLG_01732. Ca(2+) is required as a cofactor. In terms of tissue distribution, mostly expressed in rosette leaves and flowers, to lower extent, in cauline leaves, roots and stems, and, at low levels, in siliques.

The protein resides in the nucleus membrane. In terms of biological role, may be involved in membrane trafficking. Acts as a repressor of abiotic stress (e.g. drought and salt) responses by binding specifically to the promoter of THAS1 to regulate its transcription. Binds to membrane lipid ceramides. The chain is Calcium-dependent lipid-binding protein from Arabidopsis thaliana (Mouse-ear cress).